Reading from the N-terminus, the 367-residue chain is MDAKLSPNQGLNISGIGLASSLAAGLGIAALTLDWIANRNPWQGTSLTLPLLLCTIASAIAGYFVVPLLQALKTGQIIREDGPQAHLKKAGTPTMGGIFFIPVAVVGACVLSNFATEVLAVSALTLSYGLIGWIDDWQILRRKSNKGISPRMKLALQICFAAAFCLWLMFNQPANITSIALPWVSFALPLGFLFWPLAGFVLVAESNATNLTDGIDGLAGGTVAIALLALGAIVAPTSPALMVFCAALSGSCLGFLAHNRNPARVFMGDTGSLALGGALAAVALLTNSLVALFILSGIFFVETLSVMAQVSYYKATKGPDGKGKRLLKMAPLHHHLELSGWSELQVVSSFYVIATILAVICLAIAPF.

The next 10 helical transmembrane spans lie at 13–33 (ISGI…ALTL), 49–69 (LPLL…VPLL), 95–115 (MGGI…SNFA), 119–139 (LAVS…DWQI), 154–174 (LALQ…NQPA), 183–203 (WVSF…FVLV), 215–235 (IDGL…AIVA), 237–257 (TSPA…GFLA), 281–301 (AVAL…IFFV), and 347–367 (VSSF…IAPF).

Belongs to the glycosyltransferase 4 family. MraY subfamily. The cofactor is Mg(2+).

It localises to the cell inner membrane. It carries out the reaction UDP-N-acetyl-alpha-D-muramoyl-L-alanyl-gamma-D-glutamyl-meso-2,6-diaminopimeloyl-D-alanyl-D-alanine + di-trans,octa-cis-undecaprenyl phosphate = di-trans,octa-cis-undecaprenyl diphospho-N-acetyl-alpha-D-muramoyl-L-alanyl-D-glutamyl-meso-2,6-diaminopimeloyl-D-alanyl-D-alanine + UMP. It participates in cell wall biogenesis; peptidoglycan biosynthesis. Catalyzes the initial step of the lipid cycle reactions in the biosynthesis of the cell wall peptidoglycan: transfers peptidoglycan precursor phospho-MurNAc-pentapeptide from UDP-MurNAc-pentapeptide onto the lipid carrier undecaprenyl phosphate, yielding undecaprenyl-pyrophosphoryl-MurNAc-pentapeptide, known as lipid I. This chain is Phospho-N-acetylmuramoyl-pentapeptide-transferase, found in Trichormus variabilis (strain ATCC 29413 / PCC 7937) (Anabaena variabilis).